Reading from the N-terminus, the 230-residue chain is MTTLTARPEAITFDPQQTALIVVDMQNAYATPGGYLDLAGFDVSTTRPVIANIQTAVTAARAAGMLIIWFQNGWDAQYVEAGGPGSPNFHKSNALKTMRKQPQLQGKLLAKGSWDYQLVDELVPQPGDIVLPKPRYSSFFNTPLDSILRSRGIRHLVFTGIATNVCVESTLRDGFFLEYFGVVLEDATHQAGPEFAQKAALFNIETFFGWVSDVETFCDALSPTSFARIA.

D24 functions as the Proton acceptor in the catalytic mechanism. K133 is a catalytic residue. C166 functions as the Nucleophile in the catalytic mechanism.

It belongs to the isochorismatase family. RutB subfamily.

The catalysed reaction is (Z)-3-ureidoacrylate + H2O + H(+) = (Z)-3-aminoacrylate + NH4(+) + CO2. It carries out the reaction (Z)-3-ureidoacrylate + H2O = (Z)-3-aminoacrylate + carbamate + H(+). It catalyses the reaction (Z)-2-methylureidoacrylate + H2O + H(+) = (Z)-2-methylaminoacrylate + NH4(+) + CO2. Functionally, hydrolyzes ureidoacrylate to form aminoacrylate and carbamate. The carbamate hydrolyzes spontaneously, thereby releasing one of the nitrogen atoms of the pyrimidine ring as ammonia and one of its carbon atoms as CO2. The sequence is that of Ureidoacrylate amidohydrolase RutB from Escherichia coli O7:K1 (strain IAI39 / ExPEC).